A 493-amino-acid polypeptide reads, in one-letter code: MSLMFSSPVVTPALGSFTFSSRPRSNYIVMSAVRSNSASTCPILTKFQKDCATPTPYLRNVANAIADDMRDGLAVEGGGDLEMILTFVDALPSGNEEGLFYALDLGGTNFRVRSVQLGGKKERVLATESEQISISQKLMIGTSEELFGFIASKLANFVAKEKPGRFLLEEGRKRELGFTFSFPVKQTSIDSGTLSKWTKGFKVSGMEGKNVVACLNEAMEAHGLDMRVSALVNDGVGTLAGARYWDEDVMVGVILGTGTNACYVEQKHAIPKLRSKSSSGTTIINTEWGGFSKILPQTIFDLEMDETSLNPGEHLYEKMISGMYLGEIVRRVLLHMCETSDLFGHFAPAKLSTPLALRTEHLCKMQEDNTDDLRDVGSILYDFLDVEANMNARRRVVEVCDTVVKRGGRLAGAGIVAILEKIEKDTKRMGSGKRTVVAMDGALYEKYPQYRQYMQDALVELLGHKLASHVAIKHTKDVSGLGAALLAATNSIY.

In terms of domain architecture, Hexokinase spans 38–488; that stretch reads ASTCPILTKF…SGLGAALLAA (451 aa). A hexokinase small subdomain region spans residues 93-232; that stretch reads SGNEEGLFYA…GLDMRVSALV (140 aa). Residues Gly107, Thr108, and Asn109 each coordinate ADP. Residues Thr198, Lys199, Asn233, and Asp234 each coordinate D-glucose. Residues 233 to 477 are hexokinase large subdomain; that stretch reads NDGVGTLAGA…SHVAIKHTKD (245 aa). Thr257 contributes to the ADP binding site. D-glucose-binding residues include Asn260, Glu287, and Glu317. Position 442 (Ala442) interacts with ADP.

It belongs to the hexokinase family.

It carries out the reaction a D-hexose + ATP = a D-hexose 6-phosphate + ADP + H(+). It catalyses the reaction D-fructose + ATP = D-fructose 6-phosphate + ADP + H(+). The enzyme catalyses D-glucose + ATP = D-glucose 6-phosphate + ADP + H(+). It functions in the pathway carbohydrate metabolism; hexose metabolism. Its pathway is carbohydrate degradation; glycolysis; D-glyceraldehyde 3-phosphate and glycerone phosphate from D-glucose: step 1/4. Fructose and glucose phosphorylating enzyme. The polypeptide is Hexokinase-like 1 protein (Arabidopsis thaliana (Mouse-ear cress)).